The chain runs to 472 residues: Probable glycine dehydrogenase (decarboxylating) subunit 2 (472 aa).

Residue Lys-268 is modified to N6-(pyridoxal phosphate)lysine.

This sequence belongs to the GcvP family. C-terminal subunit subfamily. As to quaternary structure, the glycine cleavage system is composed of four proteins: P, T, L and H. In this organism, the P 'protein' is a heterodimer of two subunits. The cofactor is pyridoxal 5'-phosphate.

It catalyses the reaction N(6)-[(R)-lipoyl]-L-lysyl-[glycine-cleavage complex H protein] + glycine + H(+) = N(6)-[(R)-S(8)-aminomethyldihydrolipoyl]-L-lysyl-[glycine-cleavage complex H protein] + CO2. In terms of biological role, the glycine cleavage system catalyzes the degradation of glycine. The P protein binds the alpha-amino group of glycine through its pyridoxal phosphate cofactor; CO(2) is released and the remaining methylamine moiety is then transferred to the lipoamide cofactor of the H protein. The protein is Probable glycine dehydrogenase (decarboxylating) subunit 2 of Thermoplasma volcanium (strain ATCC 51530 / DSM 4299 / JCM 9571 / NBRC 15438 / GSS1).